A 398-amino-acid chain; its full sequence is Putative L-rhamnonate dehydratase (398 aa).

Substrate-binding residues include His-29 and Arg-55. Asp-221, Glu-247, and Glu-274 together coordinate Mg(2+). The active-site Proton acceptor is His-324. Glu-344 lines the substrate pocket.

It belongs to the mandelate racemase/muconate lactonizing enzyme family. RhamD subfamily. Requires Mg(2+) as cofactor.

The catalysed reaction is L-rhamnonate = 2-dehydro-3-deoxy-L-rhamnonate + H2O. In terms of biological role, catalyzes the dehydration of L-rhamnonate to 2-keto-3-deoxy-L-rhamnonate (KDR). The chain is Putative L-rhamnonate dehydratase from Caldivirga maquilingensis (strain ATCC 700844 / DSM 13496 / JCM 10307 / IC-167).